Consider the following 2672-residue polypeptide: eIF-2-alpha kinase activator GCN1 (2672 aa).

HEAT repeat units follow at residues 5 to 42 (LNWE…QETL), 79 to 117 (NLEP…WINS), 174 to 211 (CIFQ…YSKL), 227 to 267 (QAAL…NPPS), 329 to 366 (FASS…KISN), 372 to 410 (EDLT…THYE), 509 to 549 (HGHA…NSSI), 611 to 648 (KYVT…IFNI), 706 to 745 (IQPN…EEGV), 902 to 932 (QDYL…IDSI), and 933 to 970 (SLTY…EEDE). One copy of the HEAT 12; degenerate repeat lies at 975–994 (LLLAMEIISVHAEAFEDPSI). Residues 995-1030 (PRISIVEVLLSLLSLPSKAKIAKDCFNALCQSISVA) form an HEAT 13; degenerate repeat. HEAT repeat units follow at residues 1031-1067 (PNQE…LEPF), 1099-1138 (VVND…FTSE), 1185-1224 (STVA…REPI), 1243-1281 (QNSK…HLQQ), 1284-1321 (ARIH…QFKQ), 1363-1401 (LSEF…SLGK), 1405-1442 (PYVI…HTTG), 1444-1480 (GVKK…LDPT), 1484-1521 (ASLS…VIRN), 1523-1559 (EIQK…HYID), 1561-1598 (PSLA…LVDT), 1603-1640 (PYLQ…RLGE), 1641-1679 (EQFP…GLGL), 1681-1717 (KLDE…CFGS), 1721-1758 (PYIN…NYAT), 1760-1796 (AVDL…QVTG), 1825-1862 (DRRD…NTPR), 1863-1903 (AVKE…RVGG), 1905-1942 (ALSQ…SAST), 1947-1984 (QFQS…VVGK), 1985-2024 (TAVD…VIFP), 2026-2055 (LIPT…SALY), 2057-2095 (RLSI…SVND), 2097-2134 (EGLH…KTVL), 2138-2175 (VYIP…KVDK), 2206-2243 (RGPN…KTPA), 2250-2286 (VSVI…KIPM), 2290-2328 (PFIP…HQPR), 2347-2384 (GVKT…EEML), 2392-2429 (VAYA…ETGK), 2450-2487 (GLID…LEGE), and 2506-2546 (ENIN…FKFD). The interval 1330–1641 (LMEKLLNPTV…GALVERLGEE (312 aa)) is EF3-like region. The segment at 2207-2356 (GPNCVLPIFL…GVKTAMLKAL (150 aa)) is RWDBD region.

Belongs to the GCN1 family. Interacts (via N- and C-terminus) with GCN2 (via N-terminal RWD domain); this interaction stimulates GCN2 kinase activity in a GCN20-dependent manner in response to amino acid starvation. Interacts (via C-terminus) with GCN20 (via N-terminus); this interaction stimulates GCN2 kinase activity in response to amino acid starvation. The GCN1-GCN20 complex interacts with GCN2 on translating ribosomes in amino acid-starved cells; GCN1 may bind near the ribosomal A-site and promotes the transfer of uncharged tRNAs from the A-site to the tRNA-binding domain in GCN2 for its subsequent kinase activation, and hence allowing GCN4 translational activation and derepression of amino acid biosynthetic genes. Interacts (via C-terminus) with YIH1 (via N-terminus); this interaction reduces the GCN1-GCN20 complex formation and prevents the interaction of GCN1 with GCN2 and GCN2 kinase activation in amino acid-starved cells. Interacts with GIR2; this interaction prevents the interaction of GCN1 with GCN2 and GCN2 kinase activation in amino acid-starved cells. Interacts (via middle region) with RPS10A and RPS10B; these interactions are direct and promote GCN2 kinase activation. Associates (via N-terminus) with ribosomes; this association is stimulated in a ATP- and GCN20-dependent manner and is necessary to activate GCN2 kinase activity.

It is found in the cytoplasm. Its function is as follows. Ribosome collision sensor that activates a translation quality control pathway when a ribosome has stalled during translation. Directly binds to the ribosome and acts as a sentinel for colliding ribosomes. GCN1 also acts as a positive activator of the integrated stress response (ISR) by mediating activation of GCN2 in response to low amino acid, carbon, or purine availability. Component of the GCN1-GCN20 complex that forms a complex with GCN2 on translating ribosomes: during this process, GCN1 acts as a chaperone to facilitate delivery of uncharged tRNAs that enter the A-site of ribosomes to the tRNA-binding domain of GCN2, and hence stimulating GCN2 kinase activity, leading to phosphorylation of eukaryotic translation initiation factor 2 (eIF-2-alpha/SUI2). eIF-2-alpha/SUI2 phosphorylation converts eIF-2-alpha/SUI2 into a global protein synthesis inhibitor, leading to a global attenuation of cap-dependent translation, and thus to a reduced overall utilization of amino acids, while concomitantly initiating the preferential translation of ISR-specific mRNAs, such as the transcriptional activator GCN4, and hence allowing GCN4-mediated reprogramming of amino acid biosynthetic gene expression to alleviate nutrient depletion. This chain is eIF-2-alpha kinase activator GCN1, found in Saccharomyces cerevisiae (strain ATCC 204508 / S288c) (Baker's yeast).